We begin with the raw amino-acid sequence, 1481 residues long: Cystic fibrosis transmembrane conductance regulator (1481 aa).

The Cytoplasmic segment spans residues 1–77 (MQRSPLEKAS…KLINALRRCF (77 aa)). The helical transmembrane segment at 78–98 (FWRFMFYGIILYLGEVTKAVQ) threads the bilayer. In terms of domain architecture, ABC transmembrane type-1 1 spans 81–365 (FMFYGIILYL…WAVQTWYDSL (285 aa)). The Extracellular segment spans residues 99 to 122 (PLLLGRIIASYDPDNEAERSIAIY). A helical membrane pass occupies residues 123–146 (LGIGLCLLFIVRTLLLHPAIFGLH). Over 147 to 195 (HIGMQMRIAMFSLIYKKTLKLSSRVLDKISIGQLVSLLSNNLNKFDEGL) the chain is Cytoplasmic. Residues 196–216 (ALAHFVWIAPLQVTLLMGLLW) traverse the membrane as a helical segment. Residues 217-222 (DLLQAS) lie on the Extracellular side of the membrane. Residues 223 to 243 (AFCGLAFLIVLALFQAGLGRM) form a helical membrane-spanning segment. Topologically, residues 244–298 (MMKYRDQRAGKINERLVITSEMIENIQSVKAYCWEEAMEKMIENLRQTELKLTRK) are cytoplasmic. A helical membrane pass occupies residues 299–319 (AAYVRYFNSSAFFFSGFFVVF). At 320 to 339 (LSVLPYALIKGIVLRRIFTT) the chain is on the extracellular side. The chain crosses the membrane as a helical span at residues 340–358 (ISFCIVLRMAVTRQFPWAV). Residues 359–858 (QTWYDSLGAI…YLRYITIHKS (500 aa)) lie on the Cytoplasmic side of the membrane. ATP is bound by residues Trp-401, Ser-433, 457–464 (GSTGAGKT), and Gln-492. The ABC transporter 1 domain occupies 422-645 (NGDNSLFFSN…RPDFSSKLMG (224 aa)). Cys-523 carries the S-palmitoyl cysteine lipid modification. Phosphoserine is present on residues Ser-548 and Ser-659. The disordered R region stretch occupies residues 653 to 831 (SAERRNSILT…EEINEDDLKE (179 aa)). At Ser-669 the chain carries Phosphoserine; by PKA. At Ser-685 the chain carries Phosphoserine. Lys-687 is covalently cross-linked (Glycyl lysine isopeptide (Lys-Gly) (interchain with G-Cter in ubiquitin)). A phosphoserine mark is found at Ser-699 and Ser-711. The residue at position 716 (Thr-716) is a Phosphothreonine. A phosphoserine mark is found at Ser-736, Ser-767, Ser-790, Ser-795, and Ser-813. The chain crosses the membrane as a helical span at residues 859–879 (LIFVLIWCLVIFLAEVAASLV). The ABC transmembrane type-1 2 domain occupies 859 to 1155 (LIFVLIWCLV…AVNSSIDVDS (297 aa)). Residues 880-918 (VLWLLKETPPQDSGNSTKGANNSYAVIITSTSSYYVFYI) are Extracellular-facing. 2 N-linked (GlcNAc...) asparagine glycosylation sites follow: Asn-894 and Asn-900. The chain crosses the membrane as a discontinuously helical span at residues 919–939 (YVGVADTLLALGLFRGLPLVH). The Cytoplasmic portion of the chain corresponds to 940-990 (TLITVSKILHHKMLHSVLQAPMSTLNTLKAGGILNRFSKDMAILDDLLPLT). A helical transmembrane segment spans residues 991–1011 (IFDFIQLLLIVIGAVAVVSVL). At 1012 to 1013 (QP) the chain is on the extracellular side. Residues 1014 to 1034 (YIFLATVPVIAAFIILRAYFL) traverse the membrane as a helical segment. At 1035–1095 (HTSQQLKQLE…TANWFLYLST (61 aa)) the chain is on the cytoplasmic side. Residues 1096–1116 (LRWFQMRIEMIFVIFFIAVTF) form a helical membrane-spanning segment. Residues 1117–1130 (ISILTTGEGEGTVG) are Extracellular-facing. Residues 1131-1151 (IILTLAMNIMSTLQWAVNSSI) traverse the membrane as a helical segment. Residues 1152 to 1481 (DVDSLMRSVS…TEEEVQETRL (330 aa)) lie on the Cytoplasmic side of the membrane. One can recognise an ABC transporter 2 domain in the interval 1211–1444 (MTVKDLTAKY…KSLFQQAISS (234 aa)). ATP contacts are provided by residues Tyr-1220 and 1245–1252 (GRTGSGKS). Residues 1387 to 1481 (RTLKQAFADC…TEEEVQETRL (95 aa)) form an interaction with GORASP2 region. Residue Cys-1396 is the site of S-palmitoyl cysteine attachment. Residues Ser-1445 and Ser-1457 each carry the phosphoserine modification. Residues 1449–1481 (KLFPHRNSSKHKSRSKIAALQEETEEEVQETRL) are disordered. Residues 1451 to 1463 (FPHRNSSKHKSRS) show a composition bias toward basic residues. The segment covering 1470–1481 (EETEEEVQETRL) has biased composition (acidic residues). The PDZ-binding motif lies at 1479–1481 (TRL).

Belongs to the ABC transporter superfamily. ABCC family. CFTR transporter (TC 3.A.1.202) subfamily. In terms of assembly, monomer; does not require oligomerization for channel activity. May form oligomers in the membrane. Interacts with SLC26A3, SLC26A6 and NHERF1. Interacts with SHANK2. Interacts with MYO6. Interacts (via C-terminus) with GOPC (via PDZ domain); this promotes CFTR internalization and thereby decreases channel activity. Interacts with SLC4A7 through NHERF1. Found in a complex with MYO5B and RAB11A. Interacts with ANO1. Interacts with SLC26A8. Interacts with AHCYL1; the interaction increases CFTR activity. Interacts with CSE1L. The core-glycosylated form interacts with GORASP2 (via PDZ GRASP-type 1 domain) in respone to ER stress. Interacts with MARCHF2; the interaction leads to CFTR ubiqtuitination and degradation. Interacts with ADGRG2. Post-translationally, N-glycosylated. Phosphorylated; cAMP treatment promotes phosphorylation and activates the channel. Dephosphorylation decreases the ATPase activity (in vitro). Phosphorylation at PKA sites activates the channel. Phosphorylation at PKC sites enhances the response to phosphorylation by PKA. Phosphorylated by AMPK; this inhibits channel activity. In terms of processing, ubiquitinated, leading to its degradation in the lysosome. Deubiquitination by USP10 in early endosomes enhances its endocytic recycling to the cell membrane. Ubiquitinated by RNF185 during ER stress. Ubiquitinated by MARCHF2.

It localises to the apical cell membrane. The protein localises to the early endosome membrane. The protein resides in the cell membrane. It is found in the recycling endosome membrane. Its subcellular location is the endoplasmic reticulum membrane. It localises to the nucleus. The enzyme catalyses ATP + H2O + closed Cl(-) channel = ADP + phosphate + open Cl(-) channel.. It carries out the reaction chloride(in) = chloride(out). The catalysed reaction is hydrogencarbonate(in) = hydrogencarbonate(out). It catalyses the reaction ATP + H2O = ADP + phosphate + H(+). Functionally, epithelial ion channel that plays an important role in the regulation of epithelial ion and water transport and fluid homeostasis. Mediates the transport of chloride ions across the cell membrane. Possesses an intrinsic ATPase activity and utilizes ATP to gate its channel; the passive flow of anions through the channel is gated by cycles of ATP binding and hydrolysis by the ATP-binding domains. The ion channel is also permeable to HCO(3)(-); selectivity depends on the extracellular chloride concentration. Exerts its function also by modulating the activity of other ion channels and transporters. Contributes to the regulation of the pH and the ion content of the epithelial fluid layer. Modulates the activity of the epithelial sodium channel (ENaC) complex, in part by regulating the cell surface expression of the ENaC complex. May regulate bicarbonate secretion and salvage in epithelial cells by regulating the transporter SLC4A7. Can inhibit the chloride channel activity of ANO1. Plays a role in the chloride and bicarbonate homeostasis during sperm epididymal maturation and capacitation. The polypeptide is Cystic fibrosis transmembrane conductance regulator (Equus caballus (Horse)).